We begin with the raw amino-acid sequence, 156 residues long: Probable cyclic pyranopterin monophosphate synthase (156 aa).

Substrate-binding positions include 74 to 76 and 110 to 111; these read MCH and ME. D125 is an active-site residue.

This sequence belongs to the MoaC family. In terms of assembly, homohexamer; trimer of dimers.

It catalyses the reaction (8S)-3',8-cyclo-7,8-dihydroguanosine 5'-triphosphate = cyclic pyranopterin phosphate + diphosphate. Its pathway is cofactor biosynthesis; molybdopterin biosynthesis. Its function is as follows. Catalyzes the conversion of (8S)-3',8-cyclo-7,8-dihydroguanosine 5'-triphosphate to cyclic pyranopterin monophosphate (cPMP). This chain is Probable cyclic pyranopterin monophosphate synthase, found in Methanospirillum hungatei JF-1 (strain ATCC 27890 / DSM 864 / NBRC 100397 / JF-1).